We begin with the raw amino-acid sequence, 90 residues long: Small ribosomal subunit protein bS16 (90 aa).

This sequence belongs to the bacterial ribosomal protein bS16 family.

This Streptococcus equi subsp. zooepidemicus (strain H70) protein is Small ribosomal subunit protein bS16.